Reading from the N-terminus, the 207-residue chain is Partner of Y14 and mago (207 aa).

Disordered regions lie at residues 1–28 (MSTY…KARR) and 52–133 (QRQA…NSIS). Positions 64 to 91 (LLAAESKKEREKQERTRAKKQEKESGRQ) form a coiled coil. The segment covering 68-90 (ESKKEREKQERTRAKKQEKESGR) has biased composition (basic and acidic residues). Over residues 123–133 (PSGSRDINSIS) the composition is skewed to polar residues. The stretch at 152–184 (AKQLKKLRKKIREIEQIESRIQAGEQKKLDKDQ) forms a coiled coil.

It belongs to the pym family. Interacts (via N-terminus) with mago and tsu/RBM8A; the interaction is direct. As to expression, expression detected in the ovary. In the oocyte expressed in the germarium, nurse cell and follicle cell.

It localises to the cytoplasm. Its subcellular location is the nucleus. Functionally, regulator of the exon junction complex (EJC), a multiprotein complex that associates immediately upstream of the exon-exon junction on mRNAs and serves as a positional landmark for the intron exon structure of genes and directs post-transcriptional processes in the cytoplasm such as mRNA export, nonsense-mediated mRNA decay (NMD) or translation. Acts as an EJC disassembly factor by disrupting mature EJC from spliced mRNAs. Required for normal localization of osk mRNA to the posterior pole of the developing oocyte. Does not interact with the small ribosomal unit or components of the translation initiation complex. May not function in cap-dependent translation regulation. This Drosophila melanogaster (Fruit fly) protein is Partner of Y14 and mago.